Here is a 268-residue protein sequence, read N- to C-terminus: Hydroxyacylglutathione hydrolase (268 aa).

Residues histidine 56, histidine 58, aspartate 60, histidine 61, histidine 113, aspartate 130, and histidine 168 each contribute to the Zn(2+) site.

This sequence belongs to the metallo-beta-lactamase superfamily. Glyoxalase II family. In terms of assembly, monomer. The cofactor is Zn(2+).

The enzyme catalyses an S-(2-hydroxyacyl)glutathione + H2O = a 2-hydroxy carboxylate + glutathione + H(+). Its pathway is secondary metabolite metabolism; methylglyoxal degradation; (R)-lactate from methylglyoxal: step 2/2. Thiolesterase that catalyzes the hydrolysis of S-D-lactoyl-glutathione to form glutathione and D-lactic acid. The sequence is that of Hydroxyacylglutathione hydrolase from Hydrogenovibrio crunogenus (strain DSM 25203 / XCL-2) (Thiomicrospira crunogena).